Consider the following 256-residue polypeptide: NH(3)-dependent NAD(+) synthetase (256 aa).

29 to 36 is a binding site for ATP; sequence GISGGIDS. D35 provides a ligand contact to Mg(2+). R115 contacts deamido-NAD(+). T135 serves as a coordination point for ATP. E140 contributes to the Mg(2+) binding site. 2 residues coordinate deamido-NAD(+): K148 and D155. ATP-binding residues include K164 and S186. 245-246 provides a ligand contact to deamido-NAD(+); that stretch reads HK.

It belongs to the NAD synthetase family. Homodimer.

The catalysed reaction is deamido-NAD(+) + NH4(+) + ATP = AMP + diphosphate + NAD(+) + H(+). It participates in cofactor biosynthesis; NAD(+) biosynthesis; NAD(+) from deamido-NAD(+) (ammonia route): step 1/1. Its function is as follows. Catalyzes the ATP-dependent amidation of deamido-NAD to form NAD. Uses ammonia as a nitrogen source. This chain is NH(3)-dependent NAD(+) synthetase, found in Methanosarcina mazei (strain ATCC BAA-159 / DSM 3647 / Goe1 / Go1 / JCM 11833 / OCM 88) (Methanosarcina frisia).